The following is a 187-amino-acid chain: MNLQHHFLIAMPSLQDPQFKRSVIYICEHDEKGAMGLVINKPLEQLTVETILEKLKIKSPSRDPAIRLDNVVLAGGPLAEDRGFILHSPQEGFASSIHISPETMITTSKDVLETLGTSGQPKNLLVALGYASWRQGQLEQELLDNVWLTTEADTHILFNTPIAERWQAAANKLGINIFNIAPQAGHA.

Belongs to the UPF0301 (AlgH) family.

The sequence is that of UPF0301 protein YPTS_3341 from Yersinia pseudotuberculosis serotype IB (strain PB1/+).